The sequence spans 118 residues: Protein BEX4 (118 aa).

The segment at 14 to 50 (VEKDKKNKKGGKASKQSEEESHHLEEVENKKPGGNVR) is disordered. Over residues 28 to 44 (KQSEEESHHLEEVENKK) the composition is skewed to basic and acidic residues. The tract at residues 30-88 (SEEESHHLEEVENKKPGGNVRRKVRRLVPNFLWAIPNRHVDHSEGGEEVGRFVGQVMEA) is interaction with SIRT2. Residues 30-118 (SEEESHHLEE…DNHYDFCLIP (89 aa)) form an interaction with alpha-tubulin region. Residue C115 participates in Zn(2+) binding.

This sequence belongs to the BEX family. In terms of assembly, interacts with alpha-tubulin. Interacts with SIRT2. Ubiquitinated and degraded by the proteasome.

Its subcellular location is the cytoplasm. The protein localises to the cytoskeleton. It is found in the spindle pole. The protein resides in the nucleus. Functionally, may play a role in microtubule deacetylation by negatively regulating the SIRT2 deacetylase activity toward alpha-tubulin and thereby participate in the control of cell cycle progression and genomic stability. In absence of reductive stress, acts as a pseudosubstrate for the CRL2(FEM1B) complex: associates with FEM1B via zinc, thereby preventing association between FEM1B and its substrates. In Rattus norvegicus (Rat), this protein is Protein BEX4.